Here is a 280-residue protein sequence, read N- to C-terminus: Protoheme IX farnesyltransferase 2 (280 aa).

Helical transmembrane passes span 12 to 32 (VIWL…GGVD), 35 to 55 (LFSL…FNHY), 76 to 96 (LITP…GISL), 98 to 118 (FLLL…FYAV), 129 to 149 (WLNI…GYAL), 158 to 178 (AVLI…ALAF), 199 to 221 (ERAV…WLYL), 226 to 248 (GAGG…YAAV), and 255 to 275 (MWKM…ALMI).

The protein belongs to the UbiA prenyltransferase family. Protoheme IX farnesyltransferase subfamily.

It localises to the cell membrane. It carries out the reaction heme b + (2E,6E)-farnesyl diphosphate + H2O = Fe(II)-heme o + diphosphate. It functions in the pathway porphyrin-containing compound metabolism; heme O biosynthesis; heme O from protoheme: step 1/1. Functionally, converts heme B (protoheme IX) to heme O by substitution of the vinyl group on carbon 2 of heme B porphyrin ring with a hydroxyethyl farnesyl side group. In Pyrobaculum aerophilum (strain ATCC 51768 / DSM 7523 / JCM 9630 / CIP 104966 / NBRC 100827 / IM2), this protein is Protoheme IX farnesyltransferase 2.